Reading from the N-terminus, the 53-residue chain is UPF0181 protein VC_A0569 (53 aa).

The protein belongs to the UPF0181 family.

The sequence is that of UPF0181 protein VC_A0569 from Vibrio cholerae serotype O1 (strain ATCC 39315 / El Tor Inaba N16961).